The chain runs to 91 residues: Large ribosomal subunit protein bL31 (91 aa).

The tract at residues 62–91 is disordered; the sequence is RRKYSGTKPQQTAKGKKAAPKSTPKTNKKG.

It belongs to the bacterial ribosomal protein bL31 family. Type A subfamily. As to quaternary structure, part of the 50S ribosomal subunit.

Functionally, binds the 23S rRNA. The chain is Large ribosomal subunit protein bL31 from Thermosynechococcus vestitus (strain NIES-2133 / IAM M-273 / BP-1).